Reading from the N-terminus, the 596-residue chain is MDSPLSSLSFTNTLSGKRNVLRPAARELKLMSDRNANQELDFFFPKSKHIASTLVDPFGKTCSTASPASSLAADMSMNMHIDESPALPTPRRTLFRSLSCTVETPLANKTIVSPLPESPSNDALTESYFFRQPASKYSITQDSPRVSSTIAYSFKPKASIALNTTKSEATRSSLSSSSFDSYLRPNVSRSRSSGNAPPFLRSRSSSSYSINKKKGTSGGQATRHLTYALSRTCSQSSNTTSLLESCLTDDTDDFELMSDHEDTFTMGKVADLPESSVELVEDAASIQRPNSDFGACNDNSLDDLFQASPIKPIDMLPKINKDIAFPSLKVRSPSPMAFAMQEDAEYDEQDTPVLRRTQSMFLNSTRLGLFKSQDLVCVTPKQSTKESERFISSHVEDLSLPCFAVKEDSLKRITQETLLGLLDGKFKDIFDKCIIIDCRFEYEYLGGHISTAVNLNTKQAIVDAFLSKPLTHRVALVFHCEHSAHRAPHLALHFRNTDRRMNSHRYPFLYYPEVYILHGGYKSFYENHKNRCDPINYVPMNDASHVMTCTKAMNNFKRNATFMRTKSYTFGQSVLASPDVNDSPTAMHSLSTLRRF.

2 positions are modified to phosphoserine: S99 and S178. The tract at residues 174–221 is disordered; sequence LSSSSFDSYLRPNVSRSRSSGNAPPFLRSRSSSSYSINKKKGTSGGQA. In terms of domain architecture, Rhodanese spans 429–533; that stretch reads IFDKCIIIDC…FYENHKNRCD (105 aa). C480 functions as the Phosphocysteine intermediate in the catalytic mechanism.

This sequence belongs to the MPI phosphatase family. Interacts with rad24 during G2 in a srk1-dependent manner; the interaction is increased during osmostress. Phosphorylated by srk1 in the N-terminus; phosphorylation promotes nuclear exclusion.

It localises to the cytoplasm. The protein localises to the nucleus. It catalyses the reaction O-phospho-L-tyrosyl-[protein] + H2O = L-tyrosyl-[protein] + phosphate. Tyrosine protein phosphatase which functions as a dosage-dependent inducer of mitotic and meiotic progression. Directly dephosphorylates cdc2 and stimulates its kinase activity. Required for the G2/M transition of the cell cycle. Required for induction of meiosis II. The chain is M-phase inducer phosphatase from Schizosaccharomyces pombe (strain 972 / ATCC 24843) (Fission yeast).